We begin with the raw amino-acid sequence, 207 residues long: Heat shock protein beta-1 (207 aa).

An Omega-N-methylarginine modification is found at arginine 12. Residue serine 13 is modified to Phosphoserine. Position 15 is a phosphoserine; by MAPKAPK2 and MAPKAPK3 (serine 15). Residue serine 27 is modified to Phosphoserine. The segment at 72–207 (APAYSRLLSR…AGKSEKPGTK (136 aa)) is interaction with TGFB1I1. Residues 78-186 (LLSRQLSSGV…QSAEITIPVT (109 aa)) enclose the sHSP domain. Residues serine 80 and serine 84 each carry the phosphoserine; by MAPKAPK2, MAPKAPK3 and MAPKAPK5 modification. A phosphoserine mark is found at serine 85, serine 88, and serine 100. Lysine 125 bears the N6-acetyllysine mark. The disordered stretch occupies residues 151-181 (DPTQVSSSLSPEGTLSVEAPLPKPATQSAEI). Residues 153–163 (TQVSSSLSPEG) are compositionally biased toward polar residues. Threonine 176 carries the phosphothreonine modification. Phosphoserine occurs at positions 178 and 201.

It belongs to the small heat shock protein (HSP20) family. In terms of assembly, homooligomer. Homodimer; becomes monomeric upon activation. Heterooligomer; with HSPB6. Associates with alpha- and beta-tubulin. Interacts with TGFB1I1. Interacts with CRYAB. Interacts with HSPB8. Interacts with HSPBAP1. Phosphorylated upon exposure to protein kinase C activators and heat shock. Phosphorylation by MAPKAPK2 and MAPKAPK3 in response to stress dissociates HSPB1 from large small heat-shock protein (sHsps) oligomers and impairs its chaperone activity and ability to protect against oxidative stress effectively. Phosphorylation by MAPKAPK5 in response to PKA stimulation induces F-actin rearrangement.

The protein resides in the cytoplasm. It is found in the nucleus. It localises to the cytoskeleton. Its subcellular location is the spindle. In terms of biological role, small heat shock protein which functions as a molecular chaperone probably maintaining denatured proteins in a folding-competent state. Plays a role in stress resistance and actin organization. Through its molecular chaperone activity may regulate numerous biological processes including the phosphorylation and the axonal transport of neurofilament proteins. In Sus scrofa (Pig), this protein is Heat shock protein beta-1 (HSPB1).